The following is a 376-amino-acid chain: Inactive 2'-5'-oligoadenylate synthase 1B (376 aa).

Over 1 to 351 (MEQDLRSIPA…VPTEVGVPMK (351 aa)) the chain is Cytoplasmic. The helical; Anchor for type IV membrane protein transmembrane segment at 352 to 370 (YLLCRIFWLLFWSLFHFIF) threads the bilayer. The Extracellular segment spans residues 371 to 376 (GKTSSG).

The protein belongs to the 2-5A synthase family. As to quaternary structure, interacts with OSBPL1A and ABCF3. As to expression, highly expressed in lung, spleen and thymus. Also detected at lower levels in heart, kidney, liver, lung, skeletal muscle, testes, uterus and ovaries.

It localises to the endoplasmic reticulum membrane. In terms of biological role, does not have 2'-5'-OAS activity, but can bind double-stranded RNA. The full-length protein displays antiviral activity against flaviviruses such as west Nile virus (WNV) via an alternative antiviral pathway independent of RNase L. The truncated form of the protein lacks antiviral activity. This Mus musculus (Mouse) protein is Inactive 2'-5'-oligoadenylate synthase 1B (Oas1b).